Here is a 514-residue protein sequence, read N- to C-terminus: 1-pyrroline-5-carboxylate dehydrogenase (514 aa).

Residues glutamate 286 and cysteine 320 contribute to the active site.

Belongs to the aldehyde dehydrogenase family. RocA subfamily.

It carries out the reaction L-glutamate 5-semialdehyde + NAD(+) + H2O = L-glutamate + NADH + 2 H(+). It participates in amino-acid degradation; L-proline degradation into L-glutamate; L-glutamate from L-proline: step 2/2. The protein is 1-pyrroline-5-carboxylate dehydrogenase of Staphylococcus haemolyticus (strain JCSC1435).